The primary structure comprises 292 residues: Probable 2-(5''-triphosphoribosyl)-3'-dephosphocoenzyme-A synthase (292 aa).

This sequence belongs to the CitG/MdcB family.

It catalyses the reaction 3'-dephospho-CoA + ATP = 2'-(5''-triphospho-alpha-D-ribosyl)-3'-dephospho-CoA + adenine. Functionally, involved in the formation of 2-(5''-phosphoribosyl)-3'-dephosphocoenzyme-A, the prosthetic group of the acyl-carrier protein of the malonate decarboxylase. This chain is Probable 2-(5''-triphosphoribosyl)-3'-dephosphocoenzyme-A synthase, found in Azotobacter vinelandii (strain DJ / ATCC BAA-1303).